A 291-amino-acid polypeptide reads, in one-letter code: ATP synthase gamma chain (291 aa).

It belongs to the ATPase gamma chain family. F-type ATPases have 2 components, CF(1) - the catalytic core - and CF(0) - the membrane proton channel. CF(1) has five subunits: alpha(3), beta(3), gamma(1), delta(1), epsilon(1). CF(0) has three main subunits: a, b and c.

The protein resides in the cell membrane. In terms of biological role, produces ATP from ADP in the presence of a proton gradient across the membrane. The gamma chain is believed to be important in regulating ATPase activity and the flow of protons through the CF(0) complex. This Buchnera aphidicola subsp. Schizaphis graminum (strain Sg) protein is ATP synthase gamma chain.